A 255-amino-acid polypeptide reads, in one-letter code: uncharacterized protein (255 aa).

A divalent metal cation contacts are provided by His-6, His-8, Glu-92, His-128, His-153, and Asp-203.

This sequence belongs to the metallo-dependent hydrolases superfamily. TatD-type hydrolase family. The cofactor is a divalent metal cation.

This is an uncharacterized protein from Bacillus subtilis (strain 168).